We begin with the raw amino-acid sequence, 408 residues long: LL-diaminopimelate aminotransferase (408 aa).

Substrate contacts are provided by Tyr15 and Gly42. Pyridoxal 5'-phosphate is bound by residues Tyr72, 108–109 (SK), Tyr132, Asn187, Tyr218, and 246–248 (SFS). Substrate-binding residues include Lys109, Tyr132, and Asn187. An N6-(pyridoxal phosphate)lysine modification is found at Lys249. Arg257 and Asn292 together coordinate pyridoxal 5'-phosphate. Substrate-binding residues include Asn292 and Arg388.

It belongs to the class-I pyridoxal-phosphate-dependent aminotransferase family. LL-diaminopimelate aminotransferase subfamily. As to quaternary structure, homodimer. It depends on pyridoxal 5'-phosphate as a cofactor.

It carries out the reaction (2S,6S)-2,6-diaminopimelate + 2-oxoglutarate = (S)-2,3,4,5-tetrahydrodipicolinate + L-glutamate + H2O + H(+). It functions in the pathway amino-acid biosynthesis; L-lysine biosynthesis via DAP pathway; LL-2,6-diaminopimelate from (S)-tetrahydrodipicolinate (aminotransferase route): step 1/1. Its function is as follows. Involved in the synthesis of meso-diaminopimelate (m-DAP or DL-DAP), required for both lysine and peptidoglycan biosynthesis. Catalyzes the direct conversion of tetrahydrodipicolinate to LL-diaminopimelate. The protein is LL-diaminopimelate aminotransferase of Prochlorococcus marinus (strain MIT 9211).